The chain runs to 588 residues: Adenine deaminase (588 aa).

The protein belongs to the metallo-dependent hydrolases superfamily. Adenine deaminase family. In terms of assembly, homodimer. Mn(2+) is required as a cofactor.

The catalysed reaction is adenine + H2O + H(+) = hypoxanthine + NH4(+). This is Adenine deaminase from Escherichia coli O6:H1 (strain CFT073 / ATCC 700928 / UPEC).